The following is a 502-amino-acid chain: ATP synthase subunit alpha (502 aa).

Gly169–Thr176 is a binding site for ATP.

It belongs to the ATPase alpha/beta chains family. As to quaternary structure, F-type ATPases have 2 components, CF(1) - the catalytic core - and CF(0) - the membrane proton channel. CF(1) has five subunits: alpha(3), beta(3), gamma(1), delta(1), epsilon(1). CF(0) has three main subunits: a(1), b(2) and c(9-12). The alpha and beta chains form an alternating ring which encloses part of the gamma chain. CF(1) is attached to CF(0) by a central stalk formed by the gamma and epsilon chains, while a peripheral stalk is formed by the delta and b chains.

Its subcellular location is the cell inner membrane. The enzyme catalyses ATP + H2O + 4 H(+)(in) = ADP + phosphate + 5 H(+)(out). In terms of biological role, produces ATP from ADP in the presence of a proton gradient across the membrane. The alpha chain is a regulatory subunit. This Pelobacter propionicus (strain DSM 2379 / NBRC 103807 / OttBd1) protein is ATP synthase subunit alpha.